Consider the following 125-residue polypeptide: Ribosome-binding factor A (125 aa).

The protein belongs to the RbfA family. Monomer. Binds 30S ribosomal subunits, but not 50S ribosomal subunits or 70S ribosomes.

The protein resides in the cytoplasm. In terms of biological role, one of several proteins that assist in the late maturation steps of the functional core of the 30S ribosomal subunit. Associates with free 30S ribosomal subunits (but not with 30S subunits that are part of 70S ribosomes or polysomes). Required for efficient processing of 16S rRNA. May interact with the 5'-terminal helix region of 16S rRNA. The chain is Ribosome-binding factor A from Paracidovorax citrulli (strain AAC00-1) (Acidovorax citrulli).